A 2587-amino-acid polypeptide reads, in one-letter code: Protein KINKY POLLEN (2587 aa).

The first 27 residues, 1 to 27 (MAAFLVMFIFTIALFVALLWVFFKSLP), serve as a signal peptide directing secretion. Residue N71 is glycosylated (N-linked (GlcNAc...) asparagine). The disordered stretch occupies residues 103–124 (PSHSSKGPRKPKTRKSSSGGKG). Over residues 108–117 (KGPRKPKTRK) the composition is skewed to basic residues. Residues N262, N281, and N485 are each glycosylated (N-linked (GlcNAc...) asparagine). The segment at 270 to 290 (SKGEVIDSSSGNTTSEKPPKQ) is disordered. Positions 276–285 (DSSSGNTTSE) are enriched in polar residues. A disordered region spans residues 589 to 611 (GSSSKNKQEKGAHRSKPPSGRGT). The stretch at 691–716 (TLNKEIQSTQVELETAKAIYQEFLEE) forms a coiled coil. A disordered region spans residues 784–814 (QHGNRNPEEASTVTGDKQKEEPTTTPNSLDK). N1155, N1250, N1281, and N1486 each carry an N-linked (GlcNAc...) asparagine glycan. 3 disordered regions span residues 1571–1608 (HCSK…KHPD), 1646–1673 (VDAR…DGYN), and 1729–1797 (EGNQ…PEEE). Residues 1576-1590 (AQMSRTSSLSGSTDR) are compositionally biased toward polar residues. N-linked (GlcNAc...) asparagine glycosylation occurs at N1595. The span at 1646-1666 (VDARSTKEKQSEPEENSHSDP) shows a compositional bias: basic and acidic residues. Over residues 1746–1760 (KQPSTGSGNLASQSK) the composition is skewed to polar residues. 5 N-linked (GlcNAc...) asparagine glycosylation sites follow: N1861, N1951, N1981, N2036, and N2278. The stretch at 2006 to 2036 (IEEVELAKIELEAKERDRMMLLDDIRKLTQN) forms a coiled coil. The span at 2274–2287 (QGSKNQSLKSSTIR) shows a compositional bias: polar residues. Disordered regions lie at residues 2274–2299 (QGSK…TSSF), 2319–2360 (SMEH…KKSR), and 2442–2469 (KDDI…RPGD). Composition is skewed to basic and acidic residues over residues 2289–2299 (SGRELRRTSSF), 2322–2336 (HQGE…DSKT), 2343–2359 (SVHE…DKKS), and 2442–2458 (KDDI…RTDQ). N-linked (GlcNAc...) asparagine glycans are attached at residues N2513 and N2544. The disordered stretch occupies residues 2533 to 2587 (IRRHSKKFQNQNTTKGSKKTQLSPTLSPPKEEDQYESDSSSGSSAYEEFLDQNQI). Residues 2540-2557 (FQNQNTTKGSKKTQLSPT) show a composition bias toward polar residues. Residues 2569-2579 (SDSSSGSSAYE) show a composition bias toward low complexity.

It belongs to the SABRE family. Mostly expressed in pollen and roots, especially in tip-growing cells, but also present in seedlings, stems, leaves, buds, flowers, siliques and seeds.

Its subcellular location is the secreted. It is found in the golgi apparatus. Its function is as follows. May be involved in membrane trafficking. Required for tip growth in pollen tubes and root hairs. This chain is Protein KINKY POLLEN, found in Arabidopsis thaliana (Mouse-ear cress).